Consider the following 128-residue polypeptide: Large ribosomal subunit protein mL51 (128 aa).

A mitochondrion-targeting transit peptide spans 1–31 (MAGSLSWVAGRRLWGLVPLACRSFFLGVPRL).

The protein belongs to the mitochondrion-specific ribosomal protein mL51 family. Component of the mitochondrial ribosome large subunit (39S) which comprises a 16S rRNA and about 50 distinct proteins. Interacts with OXA1L.

The protein localises to the mitochondrion. This chain is Large ribosomal subunit protein mL51 (MRPL51), found in Bos taurus (Bovine).